The primary structure comprises 418 residues: Deubiquitinase and deneddylase Dub1 (418 aa).

Residues 1-10 show a composition bias toward polar residues; it reads MLSPTNSISK. A disordered region spans residues 1 to 23; it reads MLSPTNSISKTAPVPPQDSSKPV. A helical transmembrane segment spans residues 40 to 60; that stretch reads TALAVLLVVVTLGLILLFYSF. The tract at residues 72–144 is disordered; it reads TRPSTKEQPT…PLPPKAPKPV (73 aa). The span at 86–141 shows a compositional bias: pro residues; the sequence is VPLPSPPLAVPRPSTPPPPVISRPSTPPAPTPAISPPSTPSAPKPSTPPPLPPKAP. Residues histidine 288, aspartate 305, and cysteine 358 contribute to the active site.

Belongs to the peptidase C48 family.

The protein resides in the secreted. It is found in the host cell. It localises to the membrane. Functionally, effector proteins function to alter host cell physiology and promote bacterial survival in host tissues. This protease possesses deubiquitinating and deneddylating activities. In Chlamydia trachomatis serovar B (strain TZ1A828/OT), this protein is Deubiquitinase and deneddylase Dub1 (cdu1).